The sequence spans 454 residues: UDP-N-acetylmuramoylalanine--D-glutamate ligase (454 aa).

ATP is bound at residue Gly118 to Thr124.

The protein belongs to the MurCDEF family.

The protein resides in the cytoplasm. The catalysed reaction is UDP-N-acetyl-alpha-D-muramoyl-L-alanine + D-glutamate + ATP = UDP-N-acetyl-alpha-D-muramoyl-L-alanyl-D-glutamate + ADP + phosphate + H(+). It functions in the pathway cell wall biogenesis; peptidoglycan biosynthesis. Its function is as follows. Cell wall formation. Catalyzes the addition of glutamate to the nucleotide precursor UDP-N-acetylmuramoyl-L-alanine (UMA). This is UDP-N-acetylmuramoylalanine--D-glutamate ligase from Thermosynechococcus vestitus (strain NIES-2133 / IAM M-273 / BP-1).